Consider the following 80-residue polypeptide: Dermaseptin-DA3 (80 aa).

The signal sequence occupies residues 1-22 (MAFLKKSLFLVLFLGLVSLSIC). A propeptide spanning residues 23 to 42 (EEKRENEDEEEQEDDEQSEE) is cleaved from the precursor. A disordered region spans residues 24 to 48 (EKRENEDEEEQEDDEQSEEKRGMWS). Acidic residues predominate over residues 29 to 40 (EDEEEQEDDEQS). The residue at position 77 (Leu77) is a Leucine amide. The propeptide occupies 79 to 80 (EQ).

It belongs to the frog skin active peptide (FSAP) family. Dermaseptin subfamily. In terms of tissue distribution, expressed by the skin glands.

It localises to the secreted. Possesses a potent antimicrobial activity against Gram-positive and Gram-negative bacteria. Probably acts by disturbing membrane functions with its amphipathic structure. This Agalychnis dacnicolor (Giant Mexican leaf frog) protein is Dermaseptin-DA3.